A 629-amino-acid chain; its full sequence is tRNA uridine 5-carboxymethylaminomethyl modification enzyme MnmG (629 aa).

13-18 contributes to the FAD binding site; sequence GGGHAG. An NAD(+)-binding site is contributed by 273 to 287; the sequence is GPRYCPSIEDKITRF.

The protein belongs to the MnmG family. Homodimer. Heterotetramer of two MnmE and two MnmG subunits. Requires FAD as cofactor.

It is found in the cytoplasm. Its function is as follows. NAD-binding protein involved in the addition of a carboxymethylaminomethyl (cmnm) group at the wobble position (U34) of certain tRNAs, forming tRNA-cmnm(5)s(2)U34. In Aeromonas salmonicida (strain A449), this protein is tRNA uridine 5-carboxymethylaminomethyl modification enzyme MnmG.